A 227-amino-acid polypeptide reads, in one-letter code: GTP:AMP phosphotransferase AK3, mitochondrial (227 aa).

GTP contacts are provided by Gly-17, Gly-19, Lys-20, Gly-21, and Thr-22. Position 20 is an N6-succinyllysine (Lys-20). Lys-34 carries the post-translational modification N6-acetyllysine. At Ser-37 the chain carries Phosphoserine. Residues 37-66 (SSGDLLRDNMLRGTEIGVLAKAFIDQGKLI) form an NMP region. Residues Ser-38 and Arg-43 each contribute to the AMP site. N6-succinyllysine is present on Lys-57. Lys-64 lines the AMP pocket. N6-acetyllysine; alternate is present on residues Lys-64 and Lys-80. An N6-succinyllysine; alternate mark is found at Lys-64 and Lys-80. Positions 91, 94, and 98 each coordinate AMP. The segment at 127–164 (ARWIHPASGRVYNIEFNPPKTVGIDDLTGEPLIQREDD) is LID. Arg-128, Tyr-138, Asn-139, Arg-161, and Arg-172 together coordinate GTP. An N6-acetyllysine; alternate mark is found at Lys-174 and Lys-189. An N6-succinyllysine; alternate mark is found at Lys-174 and Lys-189. Position 201 (Thr-201) interacts with GTP. N6-acetyllysine is present on Lys-203.

Belongs to the adenylate kinase family. AK3 subfamily. As to quaternary structure, monomer.

The protein resides in the mitochondrion matrix. The catalysed reaction is a ribonucleoside 5'-triphosphate + AMP = a ribonucleoside 5'-diphosphate + ADP. It carries out the reaction GTP + AMP = GDP + ADP. The enzyme catalyses ITP + AMP = IDP + ADP. Functionally, mitochondrial adenylate kinase with a specific GTP:AMP phosphotransferase activity. Could also use ITP as phosphate donor. Its physiological function is to recycle GTP into GDP which is necessary for the TCA cycle in the mitochondrial matrix. This Pongo abelii (Sumatran orangutan) protein is GTP:AMP phosphotransferase AK3, mitochondrial.